Consider the following 72-residue polypeptide: Heat-stable enterotoxin ST-IA/ST-P (72 aa).

An N-terminal signal peptide occupies residues 1–19; it reads MKKLMLAIFISVLSFPSFS. A propeptide spanning residues 20–54 is cleaved from the precursor; sequence QSTESLDSSKEKITLETKKCDVVKNNSEKKSENMN. 3 disulfide bridges follow: Cys-59/Cys-64, Cys-60/Cys-68, and Cys-63/Cys-71.

Belongs to the heat-stable enterotoxin family.

It is found in the secreted. Toxin which activates the particulate form of guanylate cyclase and increases cyclic GMP levels within the host intestinal epithelial cells. This is Heat-stable enterotoxin ST-IA/ST-P (sta1) from Escherichia coli.